Here is a 509-residue protein sequence, read N- to C-terminus: tRNA-2-methylthio-N(6)-dimethylallyladenosine synthase (509 aa).

A compositionally biased stretch (polar residues) spans 1-15 (MNEQQRLASRQANSS). Positions 1–25 (MNEQQRLASRQANSSTKKEEKDYSK) are disordered. Residues 16 to 25 (TKKEEKDYSK) are compositionally biased toward basic and acidic residues. The region spanning 66 to 184 (RKFYIRTYGC…LPYILKDAMF (119 aa)) is the MTTase N-terminal domain. 6 residues coordinate [4Fe-4S] cluster: Cys75, Cys111, Cys145, Cys221, Cys225, and Cys228. Residues 207 to 437 (RRGDIKAWVN…NTLVNEYGVN (231 aa)) form the Radical SAM core domain. Residues 440-503 (KRYIGQIVEV…TWSLNGELVK (64 aa)) enclose the TRAM domain.

It belongs to the methylthiotransferase family. MiaB subfamily. Monomer. The cofactor is [4Fe-4S] cluster.

It localises to the cytoplasm. It carries out the reaction N(6)-dimethylallyladenosine(37) in tRNA + (sulfur carrier)-SH + AH2 + 2 S-adenosyl-L-methionine = 2-methylsulfanyl-N(6)-dimethylallyladenosine(37) in tRNA + (sulfur carrier)-H + 5'-deoxyadenosine + L-methionine + A + S-adenosyl-L-homocysteine + 2 H(+). Catalyzes the methylthiolation of N6-(dimethylallyl)adenosine (i(6)A), leading to the formation of 2-methylthio-N6-(dimethylallyl)adenosine (ms(2)i(6)A) at position 37 in tRNAs that read codons beginning with uridine. The polypeptide is tRNA-2-methylthio-N(6)-dimethylallyladenosine synthase (Bacillus mycoides (strain KBAB4) (Bacillus weihenstephanensis)).